Consider the following 362-residue polypeptide: Cytochrome c peroxidase, mitochondrial (362 aa).

A mitochondrion-targeting transit peptide spans 1-40 (MASASRQILRAASRASTRTAFAPAASRGLAARTIAGRRFY). The active-site Proton acceptor is His-121. Heme b is bound at residue His-244. The Tryptophan radical intermediate role is filled by Trp-260.

Belongs to the peroxidase family. Cytochrome c peroxidase subfamily. In terms of assembly, forms a one-to-one complex with cytochrome c. Heme b serves as cofactor.

It is found in the mitochondrion matrix. The protein localises to the mitochondrion intermembrane space. The catalysed reaction is 2 Fe(II)-[cytochrome c] + H2O2 + 2 H(+) = 2 Fe(III)-[cytochrome c] + 2 H2O. Its function is as follows. Destroys radicals which are normally produced within the cells and which are toxic to biological systems. This Pyricularia oryzae (strain 70-15 / ATCC MYA-4617 / FGSC 8958) (Rice blast fungus) protein is Cytochrome c peroxidase, mitochondrial (CCP1).